Here is a 423-residue protein sequence, read N- to C-terminus: Glutamate-1-semialdehyde 2,1-aminomutase (423 aa).

Position 259 is an N6-(pyridoxal phosphate)lysine (K259).

The protein belongs to the class-III pyridoxal-phosphate-dependent aminotransferase family. HemL subfamily. The cofactor is pyridoxal 5'-phosphate.

It is found in the cytoplasm. It carries out the reaction (S)-4-amino-5-oxopentanoate = 5-aminolevulinate. It functions in the pathway porphyrin-containing compound metabolism; protoporphyrin-IX biosynthesis; 5-aminolevulinate from L-glutamyl-tRNA(Glu): step 2/2. This Methanobrevibacter smithii (strain ATCC 35061 / DSM 861 / OCM 144 / PS) protein is Glutamate-1-semialdehyde 2,1-aminomutase.